A 336-amino-acid polypeptide reads, in one-letter code: tRNA pseudouridine synthase D (336 aa).

The active-site Nucleophile is the D84. In terms of domain architecture, TRUD spans 164 to 298 (GVPNYFGEQR…TPSYRWLVGD (135 aa)).

Belongs to the pseudouridine synthase TruD family.

The catalysed reaction is uridine(13) in tRNA = pseudouridine(13) in tRNA. In terms of biological role, responsible for synthesis of pseudouridine from uracil-13 in transfer RNAs. This chain is tRNA pseudouridine synthase D, found in Cellvibrio japonicus (strain Ueda107) (Pseudomonas fluorescens subsp. cellulosa).